The chain runs to 212 residues: Bcl-2-related ovarian killer protein (212 aa).

Position 7 is a phosphoserine (S7). Positions M15–R45 are interactions with ITPR1. Glycyl lysine isopeptide (Lys-Gly) (interchain with G-Cter in ubiquitin) cross-links involve residues K25 and K32. Positions K32 to L44 match the BH4 motif. The BH3 motif lies at V66–P82. Residues L70–E78 are nuclear export signal. The short motif at H112–A131 is the BH1 element. Residues K159 and K176 each participate in a glycyl lysine isopeptide (Lys-Gly) (interchain with G-Cter in ubiquitin) cross-link. The BH2 signature appears at W164–V178. The helical transmembrane segment at W189–L209 threads the bilayer.

It belongs to the Bcl-2 family. As to quaternary structure, monomer; positively regulates apoptotic process. Homodimer. Heterodimer. Oligomer; promoted by apoptotic stimuli and BH3-only proteins; mediates constitutive activation. Interacts (via BH4 domain) with ITPR1; enhances BOK expression and stabilization; limits apoptosis and prevents ubiquitination and then degradation; protects ITPR1 from proteolysis by CASP3 during apoptosis. Interacts with ITPR2 and ITPR3; binds most strongly to ITPR2, and barely to ITPR3; regulates their expression. Interacts with XPO1; translocates to the cytoplasm. Interacts with BNIP3; promotes oligomerization. In terms of processing, ubiquitinated by AMFR/gp78 E3 ubiquitin ligase complex; mediates degradation by ubiquitin-proteasome pathway in a VCP/p97-dependent manner; prevents from pro-apoptotic activity; promotes degradation of newly synthesized proteins that are not ITPR1 associated. In terms of tissue distribution, expressed mainly in oocytes; weak expression in granulosa cells of the developing follicles. In adult human ovaries, expressed in granulosa cells at all follicular stages, but expression in primordial/primary follicles granulosa cell is stronger than in secondary and antral follicles.

Its subcellular location is the mitochondrion membrane. It is found in the endoplasmic reticulum membrane. The protein localises to the mitochondrion inner membrane. The protein resides in the cytoplasm. It localises to the nucleus. Its subcellular location is the mitochondrion. It is found in the endoplasmic reticulum. The protein localises to the mitochondrion outer membrane. The protein resides in the early endosome membrane. It localises to the recycling endosome membrane. Its subcellular location is the nucleus outer membrane. It is found in the golgi apparatus. The protein localises to the cis-Golgi network membrane. The protein resides in the trans-Golgi network membrane. It localises to the membrane. In terms of biological role, apoptosis regulator that functions through different apoptotic signaling pathways. Plays a roles as pro-apoptotic protein that positively regulates intrinsic apoptotic process in a BAX- and BAK1-dependent manner or in a BAX- and BAK1-independent manner. In response to endoplasmic reticulum stress promotes mitochondrial apoptosis through downstream BAX/BAK1 activation and positive regulation of PERK-mediated unfolded protein response. Activates apoptosis independently of heterodimerization with survival-promoting BCL2 and BCL2L1 through induction of mitochondrial outer membrane permeabilization, in a BAX- and BAK1-independent manner, in response to inhibition of ERAD-proteasome degradation system, resulting in cytochrome c release. In response to DNA damage, mediates intrinsic apoptotic process in a TP53-dependent manner. Plays a role in granulosa cell apoptosis by CASP3 activation. Plays a roles as anti-apoptotic protein during neuronal apoptotic process, by negatively regulating poly ADP-ribose polymerase-dependent cell death through regulation of neuronal calcium homeostasis and mitochondrial bioenergetics in response to NMDA excitation. In addition to its role in apoptosis, may regulate trophoblast cell proliferation during the early stages of placental development, by acting on G1/S transition through regulation of CCNE1 expression. May also play a role as an inducer of autophagy by disrupting interaction between MCL1 and BECN1. Functionally, pro-apoptotic molecule exerting its function through the mitochondrial pathway. This Homo sapiens (Human) protein is Bcl-2-related ovarian killer protein.